A 742-amino-acid polypeptide reads, in one-letter code: MTRPASAKRRSLLGILAAGTICAAALPYAAVPARADGQGNTGEAIIHADDHPENWLSYGRTYSEQRYSPLDQINRSNVGDLKLLGYYTLDTNRGQEATPLVVDGIMYATTNWSKMEALDAATGKLLWQYDPKVPGNIADKGCCDTVNRGAGYWNGKVFWGTFDGRLVAADAKTGKKVWAVNTIPADASLGKQRSYTVDGAVRVAKGLVLIGNGGAEFGARGFVSAFDAETGKLKWRFYTVPNNKNEPDHAASDNILMNKAYKTWGPKGAWVRQGGGGTVWDSLVYDPVSDLIYLAVGNGSPWNYKYRSEGIGSNLFLGSIVALKPETGEYVWHFQATPMDQWDYTSVQQIMTLDMPVKGEMRHVIVHAPKNGFFYVLDAKTGEFLSGKNYVYQNWANGLDPLTGRPMYNPDGLYTLNGKFWYGIPGPLGAHNFMAMAYSPKTHLVYIPAHQIPFGYKNQVGGFKPHADSWNVGLDMTKNGLPDTPEARTAYIKDLHGWLLAWDPVKMETVWKIDHKGPWNGGILATGGDLLFQGLANGEFHAYDATNGSDLYKFDAQSGIIAPPMTYSVNGKQYVAVEVGWGGIYPISMGGVGRTSGWTVNHSYIAAFSLDGKAKLPALNNRGFLPVKPPAQYDQKVVDNGYFQYQTYCQTCHGDNGEGAGMLPDLRWAGAIRHQDAFYNVVGRGALTAYGMDRFDTSMTPDEIEAIRQYLIKRANDTYQREVDARKNDKNIPENPTLGINP.

Residues 1 to 35 (MTRPASAKRRSLLGILAAGTICAAALPYAAVPARA) form the signal peptide. Residue Glu-96 participates in pyrroloquinoline quinone binding. A disulfide bridge connects residues Cys-142 and Cys-143. Arg-148 is a binding site for pyrroloquinoline quinone. Residue Glu-216 coordinates Ca(2+). Thr-278 is a binding site for pyrroloquinoline quinone. Asn-298 and Asp-343 together coordinate Ca(2+). Asp-343 serves as the catalytic Proton acceptor. 2 residues coordinate pyrroloquinoline quinone: Lys-370 and Ile-584. The region spanning 636-715 (KVVDNGYFQY…AIRQYLIKRA (80 aa)) is the Cytochrome c domain. The heme c site is built by Cys-649, Cys-652, His-653, and Met-692. Basic and acidic residues predominate over residues 722-732 (EVDARKNDKNI). The tract at residues 722–742 (EVDARKNDKNIPENPTLGINP) is disordered.

It belongs to the bacterial PQQ dehydrogenase family. The alcohol dehydrogenase multicomponent enzyme system is composed of a dehydrogenase subunit I (AdhA) and a cytochrome c subunit II (AdhB). Pyrroloquinoline quinone is required as a cofactor. Requires Ca(2+) as cofactor. Heme c serves as cofactor.

The protein localises to the cell membrane. It carries out the reaction ethanol + a ubiquinone = a ubiquinol + acetaldehyde. In terms of biological role, dehydrogenase component of the alcohol dehydrogenase multicomponent enzyme system which is involved in the production of acetic acid and in the ethanol oxidase respiratory chain. Quinohemoprotein alcohol dehydrogenase (ADH) catalyzes the oxidation of ethanol to acetaldehyde by transferring electrons to the ubiquinone embedded in the membrane phospholipids. The electrons transfer from ethanol to membranous ubiquinone occurs from pyrroloquinoline quinone (PQQ) to one heme c in subunit I (AdhA), and finally to two heme c in subunit II (AdhB). Besides ubiquinone reduction, ADH also has a ubiquinol (QH2) oxidation reaction which mediates electron transfer from ubiquinol to the non-energy generating bypass oxidase system. The electrons transfer occurs from ubiquinol (QH2) to the additional heme c within subunit II (AdhB). The polypeptide is Alcohol dehydrogenase (quinone), dehydrogenase subunit (Acetobacter aceti).